A 145-amino-acid polypeptide reads, in one-letter code: Actin-depolymerizing factor 2 (145 aa).

The 133-residue stretch at 13-145 (GMGVAPDIRD…DLEVLRERAH (133 aa)) folds into the ADF-H domain.

This sequence belongs to the actin-binding proteins ADF family.

Functionally, actin-depolymerizing protein. Severs actin filaments (F-actin) and binds to actin monomers. The protein is Actin-depolymerizing factor 2 (ADF2) of Oryza sativa subsp. japonica (Rice).